A 296-amino-acid chain; its full sequence is Probable AP endonuclease (296 aa).

Cysteines 16 and 20 form a disulfide. The Zn(2+) site is built by His78, His115, Glu142, His182, His218, Asp231, His233, and Glu271.

Belongs to the AP endonuclease 2 family. Zn(2+) is required as a cofactor.

It localises to the host nucleus. Its subcellular location is the host cytoplasm. The protein resides in the virion. Functionally, endonuclease that plays a role in DNA repair. Cleaves phosphodiester bonds on the 5' side of apurinic or apyrimidinic sites (AP sites). In addition to endonuclease activity, the ASFV enzyme has a proofreading 3'-5' exonuclease activity that is considerably more efficient in the elimination of a mismatch than in that of a correctly paired base. Displays 3'-phosphatase and 3'-repair diesterase activities. The single nucleotide gaps generated by the AP endonuclease are filled by the viral AP endonuclease and DNA ligase. The chain is Probable AP endonuclease from Ornithodoros (relapsing fever ticks).